A 64-amino-acid chain; its full sequence is Large ribosomal subunit protein bL32 (64 aa).

Over residues 1 to 16 (MAVQKSRKTRSRRGMR) the composition is skewed to basic residues. The interval 1-64 (MAVQKSRKTR…TPKESYEDEE (64 aa)) is disordered.

Belongs to the bacterial ribosomal protein bL32 family.

The chain is Large ribosomal subunit protein bL32 from Coxiella burnetii (strain CbuK_Q154) (Coxiella burnetii (strain Q154)).